Consider the following 73-residue polypeptide: UPF0057 membrane protein At4g30650 (73 aa).

2 consecutive transmembrane segments (helical) span residues 4–24 (NMEV…GVCL) and 37–57 (LVLT…VIVF).

Belongs to the UPF0057 (PMP3) family.

It is found in the membrane. In Arabidopsis thaliana (Mouse-ear cress), this protein is UPF0057 membrane protein At4g30650.